The following is a 156-amino-acid chain: Small ribosomal subunit protein uS7 (156 aa).

This sequence belongs to the universal ribosomal protein uS7 family. In terms of assembly, part of the 30S ribosomal subunit. Contacts proteins S9 and S11.

Its function is as follows. One of the primary rRNA binding proteins, it binds directly to 16S rRNA where it nucleates assembly of the head domain of the 30S subunit. Is located at the subunit interface close to the decoding center, probably blocks exit of the E-site tRNA. The protein is Small ribosomal subunit protein uS7 of Paraburkholderia phymatum (strain DSM 17167 / CIP 108236 / LMG 21445 / STM815) (Burkholderia phymatum).